The following is a 129-amino-acid chain: Small ribosomal subunit protein uS11 (129 aa).

Belongs to the universal ribosomal protein uS11 family. In terms of assembly, part of the 30S ribosomal subunit. Interacts with proteins S7 and S18. Binds to IF-3.

Its function is as follows. Located on the platform of the 30S subunit, it bridges several disparate RNA helices of the 16S rRNA. Forms part of the Shine-Dalgarno cleft in the 70S ribosome. The sequence is that of Small ribosomal subunit protein uS11 from Erythrobacter litoralis (strain HTCC2594).